Reading from the N-terminus, the 96-residue chain is MRPYEIMVILDPTLDERTVAPSLETFLNVVRKDGGKVEKVDIWGKRRLAYEIAKHAEGIYVVIDVKAAPATVSELDRQLSLNESVLRTKVMRTDKH.

Belongs to the bacterial ribosomal protein bS6 family.

Functionally, binds together with bS18 to 16S ribosomal RNA. This is Small ribosomal subunit protein bS6 (rpsF) from Mycobacterium bovis (strain ATCC BAA-935 / AF2122/97).